The chain runs to 502 residues: tRNA-specific adenosine deaminase 1 (502 aa).

The A to I editase domain maps to 63–501 (SMGTGTKCIG…IRNPPDYHQF (439 aa)). His-87 serves as a coordination point for Zn(2+). Glu-89 serves as the catalytic Proton donor. Residues Arg-93 and Arg-94 each contribute to the 1D-myo-inositol hexakisphosphate site. Cys-142 provides a ligand contact to Zn(2+). The disordered stretch occupies residues 174–194 (SSNLEAPGNERKCEDPDSPVT). Phosphoserine is present on Ser-191. Residue Cys-299 coordinates Zn(2+). Residues Lys-302, Arg-305, Lys-435, and Lys-470 each coordinate 1D-myo-inositol hexakisphosphate.

The protein belongs to the ADAT1 family. The cofactor is 1D-myo-inositol hexakisphosphate. In terms of tissue distribution, ubiquitously expressed.

The catalysed reaction is adenosine(37) in tRNA(Ala) + H2O + H(+) = inosine(37) in tRNA(Ala) + NH4(+). In terms of biological role, specifically deaminates adenosine-37 to inosine in tRNA-Ala. In Homo sapiens (Human), this protein is tRNA-specific adenosine deaminase 1 (ADAT1).